Reading from the N-terminus, the 399-residue chain is Brefeldin A resistance protein (399 aa).

3 stretches are compositionally biased toward basic and acidic residues: residues 1 to 31 (MTSK…DETS), 49 to 69 (SKSE…KETT), and 101 to 130 (KVEE…KESA). 2 disordered regions span residues 1–173 (MTSK…FGAF) and 191–269 (KKFA…SEII). The span at 138–157 (SPFSQFASFSNASSPFSNVS) shows a compositional bias: low complexity. Composition is skewed to basic and acidic residues over residues 205–217 (SGKE…KSSE) and 241–252 (TKSEPKEADKGS). A compositionally biased stretch (polar residues) spans 253–263 (GDSTKSTMHQL). In terms of domain architecture, RanBD1 spans 256–396 (TKSTMHQLSD…VLEAIPKGGR (141 aa)).

Phosphorylated.

The protein resides in the nucleus. The chain is Brefeldin A resistance protein (hba1) from Schizosaccharomyces pombe (strain 972 / ATCC 24843) (Fission yeast).